Consider the following 777-residue polypeptide: Spastin (777 aa).

Low complexity-rich tracts occupy residues 1-24, 51-76, and 85-94; these read MVRT…KSNN, HAHS…SSSP, and DDLTPTGSSP. Residues 1–103 are disordered; it reads MVRTKSSSSS…PRSCNGRGHS (103 aa). At 1–116 the chain is on the cytoplasmic side; sequence MVRTKSSSSS…KQNLYVVSFP (116 aa). Residues 1–215 form a required for localization to punctate cytoplasmic foci region; that stretch reads MVRTKSSSSS…RALQPLEMAT (215 aa). The segment at residues 117-137 is an intramembrane region (helical); sequence IIFLFNVLRSLIYQLFCIFRY. Residues 138–777 lie on the Cytoplasmic side of the membrane; sequence LYGASTKVLY…WSQDYGDITI (640 aa). The sufficient for interaction with microtubules and microtubule severing stretch occupies residues 213–777; the sequence is MATNRPGGGY…WSQDYGDITI (565 aa). In terms of domain architecture, MIT spans 238–313; sequence HRRAFEYISK…SMARDRLHFL (76 aa). Residues 327-474 are disordered; that stretch reads LKEKQPAPKQ…SSGSGASTPM (148 aa). 3 stretches are compositionally biased toward polar residues: residues 372–389, 406–425, and 444–460; these read QNGT…TATG, PVTN…TTVG, and QFSS…RTPI. Low complexity predominate over residues 461–471; the sequence is NNNASSGSGAS. Residues 462 to 474 form a required for interaction with microtubules region; it reads NNASSGSGASTPM. Residue 542–549 coordinates ATP; it reads GPPGNGKT.

This sequence belongs to the AAA ATPase family. Spastin subfamily. Homohexamer. The homohexamer is stabilized by ATP-binding. The homohexamer may adopt a ring conformation through which microtubules pass prior to being severed. Interacts with microtubules. Interacts with atl; may be involved in microtubule dynamics.

It localises to the membrane. The protein resides in the cytoplasm. It is found in the cytoskeleton. The protein localises to the microtubule organizing center. Its subcellular location is the centrosome. It localises to the chromosome. The protein resides in the lipid droplet. The enzyme catalyses n ATP + n H2O + a microtubule = n ADP + n phosphate + (n+1) alpha/beta tubulin heterodimers.. In terms of biological role, ATP-dependent microtubule severing protein. Stimulates microtubule minus-end depolymerization and poleward microtubule flux in the mitotic spindle. Regulates microtubule stability in the neuromuscular junction synapse. Involved in lipid metabolism by regulating the size and distribution of lipid droplets. Involved in axon regeneration by regulating microtubule severing. The polypeptide is Spastin (Drosophila willistoni (Fruit fly)).